A 122-amino-acid polypeptide reads, in one-letter code: Basic phospholipase A2 homolog (122 aa).

Disulfide bonds link C26-C116, C28-C44, C43-C96, C49-C122, C50-C89, C57-C82, and C75-C87. The interval 106–117 is important for membrane-damaging activities in eukaryotes and bacteria; heparin-binding; that stretch reads KKHRVTVKFLCK.

It belongs to the phospholipase A2 family. Group II subfamily. K49 sub-subfamily. Homodimer; non-covalently linked. In terms of tissue distribution, expressed by the venom gland.

It localises to the secreted. Snake venom phospholipase A2 (PLA2) that has almost no phospholipase A2 activity. Is myotoxic. Displays edema-inducing activities. A model of myotoxic mechanism has been proposed: an apo Lys49-PLA2 is activated by the entrance of a hydrophobic molecule (e.g. fatty acid) at the hydrophobic channel of the protein leading to a reorientation of a monomer. This reorientation causes a transition between 'inactive' to 'active' states, causing alignment of C-terminal and membrane-docking sites (MDoS) side-by-side and putting the membrane-disruption sites (MDiS) in the same plane, exposed to solvent and in a symmetric position for both monomers. The MDoS region stabilizes the toxin on membrane by the interaction of charged residues with phospholipid head groups. Subsequently, the MDiS region destabilizes the membrane with penetration of hydrophobic residues. This insertion causes a disorganization of the membrane, allowing an uncontrolled influx of ions (i.e. calcium and sodium), and eventually triggering irreversible intracellular alterations and cell death. This Protobothrops mucrosquamatus (Taiwan habu) protein is Basic phospholipase A2 homolog.